Consider the following 67-residue polypeptide: Conotoxin ArMLCL-012 (67 aa).

Positions 1 to 19 are cleaved as a signal peptide; sequence MLCLPVFIILLLLASPAAS. The propeptide occupies 20–45; that stretch reads NPLEKRIQSDLIRAALEDADTKNDPR. Position 64 is a cysteine amide (C64).

This sequence belongs to the conotoxin T superfamily. Post-translationally, contains 2 disulfide bonds that can be either 'C1-C3, C2-C4' or 'C1-C4, C2-C3', since these disulfide connectivities have been observed for conotoxins with cysteine framework V (for examples, see AC P0DQQ7 and AC P81755). Expressed by the venom duct.

The protein localises to the secreted. This Conus arenatus (Sand-dusted cone) protein is Conotoxin ArMLCL-012.